We begin with the raw amino-acid sequence, 1429 residues long: MDFFDFTKDFRREEAPSGFISSDPSSMATEMFESKPIKREVIGTDYVAEIAAKEKLLMSGQLKAEIPGQYSGGMDDLDSNDDMDDEEISKIRLDEEYYKKYRFNLNRDKNLPIYAKREVIVNAINTHQVVILKGETGCGKTTQVPQYILDEGFKSGQYCNIVVTQPRRIGAISIANRVSQERMWEPDTVCSYQVGLHRKQHLEDTRLLYCTTGVLLNSLIRNKTLTHYTHIVLDEVHERDQDMDFLLIVVRRLLATNSRHVKVILMSATIDTREFCDYFSTKVSVPPVISASHGRKHSIEKFYRDQLGSINWKDDPDDGYQARIPDEAYKAAVKIILVVDNMERQAANQSEQSYDDAKSQGAVLIFLPGIYEIDNMAESLGNMTKEEPSMKLFIVRCFSLMTPDAQRDVFSPPPSGFRKIILATNIAESSITVPDVSYVIDFCLTKVLVTDTATNFSSLRLTWASKANCRQRAGRVGRLRSGRVYRMVHKLFYKTNMTEFGVPEMLRLPLQNSVLKAKLLDIAPPIEMLALALSPPNLSDIQNTILLLKEVGALFPTVDGEYCEVDGDITFWGIIMSRLPLDTRLSRLIILGYVFNLLEEAIVIAAGLSMRGLSTEAGRGRLTSDAYWMNYVFADGSGSDLVAIWRIYRTYENMVANGMHQESAEPWARRYHVSLRALKEMHLLVQELKSRCSQLGMISFNLSSSDMPDDLEKAILLKVIIAGAFYPNYFLRSKKTTLEQERDIFHVISGRDPCRTVYFTNFKPAYMGELYTRRIKDLFQELKIPPESIEVTFQPGSQKVFVTFKSDECDTNCTRLINVPGQVLTEVYKSIRMRLYQSNRTFRVMDHNNALNYVQRHGIGTLKEGHWTPPSRPLNVEMLALPSVYEKNMTGLITHVDHCGKFFFQPKSFARCIQNMSEIINTPMHLQYEIQNAGVLTKGMMVLAKRKGTFERAIIVRPETQNNRQPKFFVRFVDYGNTDLMYIEQLRLMTKELLSQYGDLPPRVFECRLALVQPSTMSNTLSRWSRDAKDMLISASKNNIVEIEIYSLVYNVAAVMVHTRDGLLNDKLVEHNLARRADENFMSRQDHDFRIRKQESARYISGPERQQVNEEYLRSCQMPEDLDLTPPPLDKCNMIVMLKGPYSPLETSMFSTIRVGVWKTVKIDNSSVNAVLLDSDPQDNHDQLVVSHSTVESSNGDVLTARGTTLMPNIHGFGPLMTMLFCPTMQIKCNKDCTKYVSILAGLGFDKETMKPYFEEHDMVMNLDVNLYEDDVRMINQMRYNIDTMFFNFEGEELPSLNMNDRVTIYKELRKLVNRLLSKDRSYIELNASNSDFNWEKEDRIEPQPEPFGKRCIFPMHVIPELLEEDIGRRLYLIDNCKKLYKWRNFEGALDILNCKLCNMSLETTPQLRLHLLTQLHRDREKQIGFKNE.

The 168-residue stretch at 121-288 (VNAINTHQVV…FSTKVSVPPV (168 aa)) folds into the Helicase ATP-binding domain. ATP is bound at residue 134 to 141 (GETGCGKT). A DEAH box motif is present at residues 234–237 (DEVH). Residues 349 to 521 (QSEQSYDDAK…NSVLKAKLLD (173 aa)) enclose the Helicase C-terminal domain. Residues 933–996 (AGVLTKGMMV…RLMTKELLSQ (64 aa)) enclose the Tudor domain.

It belongs to the DEAD box helicase family. DEAH subfamily.

It localises to the cytoplasm. The catalysed reaction is ATP + H2O = ADP + phosphate + H(+). In terms of biological role, probable ATP-binding RNA helicase which plays a central role during spermatogenesis and oogenesis by repressing transposable elements and preventing their mobilization, which is essential for the germline integrity. Acts via the piRNA metabolic process, which mediates the repression of transposable elements during meiosis by forming complexes composed of piRNAs and Piwi and govern the methylation and subsequent repression of transposons. Involved in the repression of LTR retrotransposon copia. Also involved in telomere regulation by repressing specialized telomeric retroelements HeT-A, TAHRE, and TART; Drosophila telomeres being maintained by transposition of specialized telomeric retroelements. Involved in telomeric trans-silencing, a repression mechanism by which a transposon or a transgene inserted in subtelomeric heterochromatin has the capacity to repress in trans in the female germline, a homologous transposon, or transgene located in euchromatin. Involved in the repression of testis-expressed Stellate genes by the homologous Su(Ste) repeats. Required for anteroposterior and dorsoventral axis formation during oogenesis. This chain is Probable ATP-dependent RNA helicase spindle-E (spn-E), found in Drosophila ananassae (Fruit fly).